A 71-amino-acid chain; its full sequence is Large ribosomal subunit protein uL29 (71 aa).

This sequence belongs to the universal ribosomal protein uL29 family. In terms of assembly, part of the 50S ribosomal subunit. Interacts with protein L23.

Its function is as follows. Stabilizes the tertiary rRNA structure within the 23S rRNA domain (domain I) to which it binds. Located at the polypeptide exit tunnel on the outside of the subunit. In Haloarcula marismortui (strain ATCC 43049 / DSM 3752 / JCM 8966 / VKM B-1809) (Halobacterium marismortui), this protein is Large ribosomal subunit protein uL29 (rpl29).